Consider the following 354-residue polypeptide: Chaperone protein dnaJ 49 (354 aa).

Residues 99 to 163 form the J domain; it reads DYYAILGLEK…NSRRQFDQVG (65 aa). A helical membrane pass occupies residues 237-257; it reads CLTIIQILPFFLLLLLAYLPF.

The protein belongs to the DnaJ family. C/III subfamily.

It localises to the membrane. Plays a continuous role in plant development probably in the structural organization of compartments. This Arabidopsis thaliana (Mouse-ear cress) protein is Chaperone protein dnaJ 49 (ATJ49).